We begin with the raw amino-acid sequence, 358 residues long: Very long chain fatty acid elongase AAEL008004 (358 aa).

A run of 7 helical transmembrane segments spans residues 26-46 (WPLM…VYLV), 66-86 (LILY…EIGI), 115-135 (ACWW…FFVM), 147-167 (VIHH…TPGG), 171-191 (FFGL…LFTA), 207-227 (TSLQ…LLFI), and 234-254 (AFVW…NEFY). Polar residues predominate over residues 285 to 295 (SAVSSNGSAIT). The interval 285 to 322 (SAVSSNGSAITANGHHGKNGSVHHHSNGSATSNGTSLL) is disordered. The span at 299-310 (HHGKNGSVHHHS) shows a compositional bias: basic residues. Residues 311-322 (NGSATSNGTSLL) show a composition bias toward polar residues.

Belongs to the ELO family.

The protein localises to the membrane. It carries out the reaction a very-long-chain acyl-CoA + malonyl-CoA + H(+) = a very-long-chain 3-oxoacyl-CoA + CO2 + CoA. Could be implicated in synthesis of very long chain fatty acids. This Aedes aegypti (Yellowfever mosquito) protein is Very long chain fatty acid elongase AAEL008004.